The sequence spans 360 residues: Sphingolipid delta(4)-desaturase (360 aa).

3 helical membrane-spanning segments follow: residues 67 to 87 (AVVL…VLSF), 89 to 109 (FLAL…LCIH), and 125 to 145 (LFAI…FQPY). The Histidine box-1 motif lies at 109-113 (HELSH). Positions 146–150 (HQLHH) match the Histidine box-2 motif. 3 helical membrane-spanning segments follow: residues 170–190 (VLSS…FYAL), 202–222 (FIHL…IKFG), and 228–248 (WYLI…GHFI). Positions 288-292 (HNEHH) match the Histidine box-3 motif.

This sequence belongs to the fatty acid desaturase type 1 family. DEGS subfamily.

The protein resides in the membrane. It catalyses the reaction an N-acylsphinganine + 2 Fe(II)-[cytochrome b5] + O2 + 2 H(+) = an N-acylsphing-4-enine + 2 Fe(III)-[cytochrome b5] + 2 H2O. It functions in the pathway lipid metabolism; sphingolipid metabolism. Its function is as follows. Delta(4)-fatty-acid desaturase which introduces a double bond at the 4-position in the long-chain base (LCB) of ceramides. Required for the formation of the monounsaturated sphingoid base (E)-sphing-4-enine during glucosylceramide (GluCer) biosynthesis. The polypeptide is Sphingolipid delta(4)-desaturase (Komagataella phaffii (strain GS115 / ATCC 20864) (Yeast)).